A 282-amino-acid polypeptide reads, in one-letter code: 4-diphosphocytidyl-2-C-methyl-D-erythritol kinase (282 aa).

Residue lysine 12 is part of the active site. Residue proline 95–serine 105 coordinates ATP. Residue aspartate 137 is part of the active site.

It belongs to the GHMP kinase family. IspE subfamily.

It catalyses the reaction 4-CDP-2-C-methyl-D-erythritol + ATP = 4-CDP-2-C-methyl-D-erythritol 2-phosphate + ADP + H(+). Its pathway is isoprenoid biosynthesis; isopentenyl diphosphate biosynthesis via DXP pathway; isopentenyl diphosphate from 1-deoxy-D-xylulose 5-phosphate: step 3/6. In terms of biological role, catalyzes the phosphorylation of the position 2 hydroxy group of 4-diphosphocytidyl-2C-methyl-D-erythritol. The chain is 4-diphosphocytidyl-2-C-methyl-D-erythritol kinase from Pseudomonas aeruginosa (strain LESB58).